The primary structure comprises 319 residues: Homeobox protein Hox-B5a (319 aa).

A disordered region spans residues 114–224 (SLLSPGSGDT…NTVGSEGQPP (111 aa)). Residues 128–155 (RSSSPRSEQSGSGNLSSTNLSSSTNISS) show a composition bias toward low complexity. An Antp-type hexapeptide motif is present at residues 226 to 231 (IFPWMR). Residues 244–303 (GKRARTAYTRYQTLELEKEFHFNRYLTRRRRIEIAHALCLTERQIKIWFQNRRMKWKKDN) constitute a DNA-binding region (homeobox).

This sequence belongs to the Antp homeobox family.

Its subcellular location is the nucleus. Its function is as follows. Sequence-specific transcription factor which is part of a developmental regulatory system that provides cells with specific positional identities on the anterior-posterior axis. The chain is Homeobox protein Hox-B5a (hoxb5a) from Takifugu rubripes (Japanese pufferfish).